The sequence spans 869 residues: Aconitate hydratase A (869 aa).

3 residues coordinate [4Fe-4S] cluster: Cys411, Cys477, and Cys480.

This sequence belongs to the aconitase/IPM isomerase family. In terms of assembly, monomer. The cofactor is [4Fe-4S] cluster.

The enzyme catalyses citrate = D-threo-isocitrate. The catalysed reaction is (2S,3R)-3-hydroxybutane-1,2,3-tricarboxylate = 2-methyl-cis-aconitate + H2O. It functions in the pathway carbohydrate metabolism; tricarboxylic acid cycle; isocitrate from oxaloacetate: step 2/2. Its pathway is organic acid metabolism; propanoate degradation. In terms of biological role, involved in the catabolism of short chain fatty acids (SCFA) via the tricarboxylic acid (TCA)(acetyl degradation route) and the 2-methylcitrate cycle I (propionate degradation route). Catalyzes the reversible isomerization of citrate to isocitrate via cis-aconitate. Could catalyze the hydration of 2-methyl-cis-aconitate to yield (2S,3R)-2-methylisocitrate. The apo form of AcnA functions as a RNA-binding regulatory protein. This is Aconitate hydratase A from Cupriavidus necator (Alcaligenes eutrophus).